The following is a 212-amino-acid chain: Protein GrpE (212 aa).

A disordered region spans residues 1–68 (MAETSNNKTS…ELESAKKEIE (68 aa)). The span at 9–30 (TSEEAKANEKKSQSETLEESKL) shows a compositional bias: basic and acidic residues. A compositionally biased stretch (low complexity) spans 40–60 (ETTQTESMETAETETSLQTEL).

It belongs to the GrpE family. Homodimer.

Its subcellular location is the cytoplasm. Its function is as follows. Participates actively in the response to hyperosmotic and heat shock by preventing the aggregation of stress-denatured proteins, in association with DnaK and GrpE. It is the nucleotide exchange factor for DnaK and may function as a thermosensor. Unfolded proteins bind initially to DnaJ; upon interaction with the DnaJ-bound protein, DnaK hydrolyzes its bound ATP, resulting in the formation of a stable complex. GrpE releases ADP from DnaK; ATP binding to DnaK triggers the release of the substrate protein, thus completing the reaction cycle. Several rounds of ATP-dependent interactions between DnaJ, DnaK and GrpE are required for fully efficient folding. This Leptospira interrogans serogroup Icterohaemorrhagiae serovar copenhageni (strain Fiocruz L1-130) protein is Protein GrpE.